Reading from the N-terminus, the 305-residue chain is MTLRNHQELLVALATLYFLATSLPSVSAHGPYAWDGEATYKFTTYHPGQNYKGLSNVKNYFHHLGYIPNAPHFDDNFDDTLVSAIKTYQKNYNLNVTGKFDINTLKQIMTPRCGVPDIIINTNKTTSFGMISDYTFFKDMPRWQAGTTQLTYAFSPEPRLDDTFKSAIARAFSKWTPVVNIAFQETTSYETANIKILFASKNHGDPYPFDGPGGILGHAFAPTDGRCHFDADEYWVASGDVTKSPVTSAFDLESVAVHEIGHLLGLGHSSDLRAIMYPSIPPRTRKVNLAQDDIDGIRKLYGINP.

Residues 1–28 form the signal peptide; that stretch reads MTLRNHQELLVALATLYFLATSLPSVSA. The propeptide at 29-133 is activation peptide; it reads HGPYAWDGEA…KTTSFGMISD (105 aa). N95 carries N-linked (GlcNAc...) asparagine glycosylation. The Cysteine switch signature appears at 111–118; it reads PRCGVPDI. Zn(2+) is bound at residue C113. N-linked (GlcNAc...) asparagine glycosylation is present at N123. H258 serves as a coordination point for Zn(2+). Residue E259 is part of the active site. Residues H262 and H268 each contribute to the Zn(2+) site.

The protein belongs to the peptidase M10A family. Matrix metalloproteinases (MMPs) subfamily. It depends on Zn(2+) as a cofactor.

Its function is as follows. Matrix metalloproteinases (MMPs) or matrixins may play a role in the degradation and remodeling of the extracellular matrix (ECM) during development or in response to stresses. The sequence is that of Metalloendoproteinase 1 from Glycine max (Soybean).